A 600-amino-acid chain; its full sequence is NADH-quinone oxidoreductase subunit C/D (600 aa).

Residues 1 to 190 form an NADH dehydrogenase I subunit C region; that stretch reads MVNNMTDLTA…SPFELTKAKQ (190 aa). The tract at residues 214–600 is NADH dehydrogenase I subunit D; that stretch reads DFMFLNLGPN…IDFVMSDVDR (387 aa).

The protein in the N-terminal section; belongs to the complex I 30 kDa subunit family. This sequence in the C-terminal section; belongs to the complex I 49 kDa subunit family. In terms of assembly, NDH-1 is composed of 13 different subunits. Subunits NuoB, CD, E, F, and G constitute the peripheral sector of the complex.

The protein resides in the cell inner membrane. The enzyme catalyses a quinone + NADH + 5 H(+)(in) = a quinol + NAD(+) + 4 H(+)(out). In terms of biological role, NDH-1 shuttles electrons from NADH, via FMN and iron-sulfur (Fe-S) centers, to quinones in the respiratory chain. The immediate electron acceptor for the enzyme in this species is believed to be ubiquinone. Couples the redox reaction to proton translocation (for every two electrons transferred, four hydrogen ions are translocated across the cytoplasmic membrane), and thus conserves the redox energy in a proton gradient. This Escherichia coli O157:H7 protein is NADH-quinone oxidoreductase subunit C/D.